We begin with the raw amino-acid sequence, 333 residues long: Electron transfer flavoprotein subunit alpha, mitochondrial (333 aa).

The N-terminal 19 residues, 1–19, are a transit peptide targeting the mitochondrion; the sequence is MFRAAAPGQLRRAASLLRF. The segment at 20–204 is domain I; sequence QSTLVIAEHA…GISEWLDQKL (185 aa). K59 is subject to N6-acetyllysine; alternate. An N6-succinyllysine; alternate modification is found at K59. The residue at position 62 (K62) is an N6-acetyllysine. Residue K69 is modified to N6-acetyllysine; alternate. The residue at position 69 (K69) is an N6-succinyllysine; alternate. The residue at position 75 (K75) is an N6-acetyllysine. An N6-acetyllysine; alternate modification is found at K85. The residue at position 85 (K85) is an N6-succinyllysine; alternate. A Phosphothreonine modification is found at T93. 2 positions are modified to N6-acetyllysine: K101 and K139. S140 is modified (phosphoserine). K158 carries the post-translational modification N6-acetyllysine; alternate. At K158 the chain carries N6-succinyllysine; alternate. K164 is subject to N6-acetyllysine. N6-succinyllysine is present on K187. Residue K203 is modified to N6-acetyllysine; alternate. K203 carries the post-translational modification N6-succinyllysine; alternate. Positions 205–333 are domain II; sequence TKSDRPELTG…PEMTEILKKK (129 aa). An N6-succinyllysine modification is found at K216. R223 provides a ligand contact to FAD. N6-acetyllysine; alternate occurs at positions 226 and 232. K226 and K232 each carry N6-succinyllysine; alternate. Residues S248, 263 to 266, 281 to 286, and N300 contribute to the FAD site; these read VGQT and SGAIQH. At K301 the chain carries N6-succinyllysine. 318–319 lines the FAD pocket; it reads DL.

This sequence belongs to the ETF alpha-subunit/FixB family. In terms of assembly, heterodimer composed of ETFA and ETFB. Identified in a complex that contains ETFA, ETFB and ETFRF1. Interaction with ETFRF1 promotes dissociation of the bound FAD and loss of electron transfer activity. Interacts with TASOR. The cofactor is FAD.

Its subcellular location is the mitochondrion matrix. Its function is as follows. Heterodimeric electron transfer flavoprotein that accepts electrons from several mitochondrial dehydrogenases, including acyl-CoA dehydrogenases, glutaryl-CoA and sarcosine dehydrogenase. It transfers the electrons to the main mitochondrial respiratory chain via ETF-ubiquinone oxidoreductase (ETF dehydrogenase). Required for normal mitochondrial fatty acid oxidation and normal amino acid metabolism. In Rattus norvegicus (Rat), this protein is Electron transfer flavoprotein subunit alpha, mitochondrial (Etfa).